A 64-amino-acid polypeptide reads, in one-letter code: Prokaryotic ubiquitin-like protein Pup (64 aa).

The segment covering 1–11 (MAQEQTKRTGG) has biased composition (basic and acidic residues). The tract at residues 1–38 (MAQEQTKRTGGGDEDDTPGGDGAAGQERREKLAEDTDD) is disordered. Positions 21–58 (DGAAGQERREKLAEDTDDLLDEIDDVLEENAEDFVRAY) are ARC ATPase binding. A coiled-coil region spans residues 24-52 (AGQERREKLAEDTDDLLDEIDDVLEENAE). Deamidated glutamine is present on glutamine 64. Glutamine 64 participates in a covalent cross-link: Isoglutamyl lysine isopeptide (Gln-Lys) (interchain with K-? in acceptor proteins).

This sequence belongs to the prokaryotic ubiquitin-like protein family. Strongly interacts with the proteasome-associated ATPase ARC through a hydrophobic interface; the interacting region of Pup lies in its C-terminal half. There is one Pup binding site per ARC hexamer ring. Is modified by deamidation of its C-terminal glutamine to glutamate by the deamidase Dop, a prerequisite to the subsequent pupylation process.

Its pathway is protein degradation; proteasomal Pup-dependent pathway. Its function is as follows. Protein modifier that is covalently attached to lysine residues of substrate proteins, thereby targeting them for proteasomal degradation. The tagging system is termed pupylation. In Rhodococcus opacus (strain B4), this protein is Prokaryotic ubiquitin-like protein Pup.